The following is a 161-amino-acid chain: Regulatory protein RecX (161 aa).

It belongs to the RecX family.

It is found in the cytoplasm. Modulates RecA activity. This is Regulatory protein RecX from Halorhodospira halophila (strain DSM 244 / SL1) (Ectothiorhodospira halophila (strain DSM 244 / SL1)).